The sequence spans 621 residues: Putative 5'-3' exonuclease R528 (621 aa).

Belongs to the 5'-3' exonuclease family.

The protein localises to the virion. This is Putative 5'-3' exonuclease R528 from Acanthamoeba polyphaga mimivirus (APMV).